Consider the following 533-residue polypeptide: Putative replication factor C large subunit (533 aa).

Over residues 1–11 (MSKTAKNTKTI) the composition is skewed to polar residues. The tract at residues 1–31 (MSKTAKNTKTIKSVKSVNKDNKPNKDNKDDK) is disordered. The segment covering 17–31 (VNKDNKPNKDNKDDK) has biased composition (basic and acidic residues).

Belongs to the activator 1 large subunit family.

Part of the RFC clamp loader complex which loads the PCNA sliding clamp onto DNA. This chain is Putative replication factor C large subunit, found in Acanthamoeba polyphaga (Amoeba).